The primary structure comprises 164 residues: RNA pyrophosphohydrolase (164 aa).

In terms of domain architecture, Nudix hydrolase spans 12 to 158 (RYRQCAGVML…KREVYRAVVK (147 aa)). The Nudix box motif lies at 47–68 (GGIDPGETQQEAAMRELEEETG).

It belongs to the Nudix hydrolase family. RppH subfamily. A divalent metal cation is required as a cofactor.

In terms of biological role, accelerates the degradation of transcripts by removing pyrophosphate from the 5'-end of triphosphorylated RNA, leading to a more labile monophosphorylated state that can stimulate subsequent ribonuclease cleavage. The sequence is that of RNA pyrophosphohydrolase from Erythrobacter litoralis (strain HTCC2594).